The primary structure comprises 780 residues: Protein SEY1 (780 aa).

Residues 1–680 are Cytoplasmic-facing; that stretch reads MDSKEEAIQL…KRSMIKTTTH (680 aa). The GB1/RHD3-type G domain occupies 35–265; the sequence is GVNYHVISVF…NEDYYFKPEY (231 aa). 45–52 provides a ligand contact to GTP; it reads GSQSSGKS. Positions 440 to 463 form a coiled coil; sequence EVKEEVVKRFENDLKETSDKLRVT. The helical transmembrane segment at 681-701 threads the bilayer; the sequence is IPLWIYAIIVVLGWNEFMMVI. Residues 702–704 lie on the Lumenal side of the membrane; sequence RNP. The chain crosses the membrane as a helical span at residues 705–725; it reads LFVTLTILILVSFYFINKFDL. The Cytoplasmic portion of the chain corresponds to 726-780; the sequence is WGPVKSVAQTAAGETIGTIKTKLRDFVLEEHEKTPKIQSEKSNSDSEKVVENEKS. Positions 756–780 are disordered; that stretch reads HEKTPKIQSEKSNSDSEKVVENEKS.

This sequence belongs to the TRAFAC class dynamin-like GTPase superfamily. GB1/RHD3 GTPase family. RHD3 subfamily.

It is found in the endoplasmic reticulum membrane. Its function is as follows. Cooperates with the reticulon proteins and tubule-shaping DP1 family proteins to generate and maintain the structure of the tubular endoplasmic reticulum network. Has GTPase activity, which is required for its function in ER organization. The chain is Protein SEY1 from Vanderwaltozyma polyspora (strain ATCC 22028 / DSM 70294 / BCRC 21397 / CBS 2163 / NBRC 10782 / NRRL Y-8283 / UCD 57-17) (Kluyveromyces polysporus).